A 416-amino-acid polypeptide reads, in one-letter code: Phosphoglycerate kinase (416 aa).

Positions 23, 24, 25, 26, 38, 39, 62, 63, 65, 66, 121, 122, 168, and 169 each coordinate (2R)-3-phosphoglycerate. Glycine 212 is an ADP binding site. CDP is bound at residue glycine 212. AMP-binding residues include alanine 213 and lysine 214. An ATP-binding site is contributed by alanine 213. Alanine 213 lines the Mg(2+) pocket. Residues alanine 216 and aspartate 217 each coordinate Mg(2+). Aspartate 217 lines the CDP pocket. Lysine 218 contacts AMP. ATP is bound at residue lysine 218. Position 236 (glycine 236) interacts with ADP. Glycine 236 lines the CDP pocket. 2 residues coordinate AMP: glycine 237 and glycine 311. ATP-binding residues include glycine 237 and glycine 311. CDP-binding residues include glycine 336 and phenylalanine 341. Phenylalanine 341 provides a ligand contact to ADP. Glutamate 342 lines the AMP pocket. ATP is bound by residues glutamate 342, aspartate 373, and threonine 374. Aspartate 373 serves as a coordination point for Mg(2+).

Belongs to the phosphoglycerate kinase family. As to quaternary structure, monomer. Mg(2+) is required as a cofactor.

The protein resides in the cytoplasm. Its subcellular location is the mitochondrion. It catalyses the reaction (2R)-3-phosphoglycerate + ATP = (2R)-3-phospho-glyceroyl phosphate + ADP. It participates in carbohydrate degradation; glycolysis; pyruvate from D-glyceraldehyde 3-phosphate: step 2/5. Catalyzes one of the two ATP producing reactions in the glycolytic pathway via the reversible conversion of 1,3-diphosphoglycerate to 3-phosphoglycerate. Both L- and D- forms of purine and pyrimidine nucleotides can be used as substrates, but the activity is much lower on pyrimidines. Negatively regulates the biosynthesis of acetyl-CoA from pyruvate in the mitochondrion. In Candida glabrata (strain ATCC 2001 / BCRC 20586 / JCM 3761 / NBRC 0622 / NRRL Y-65 / CBS 138) (Yeast), this protein is Phosphoglycerate kinase (PGK1).